A 141-amino-acid polypeptide reads, in one-letter code: Large ribosomal subunit protein uL11 (141 aa).

Belongs to the universal ribosomal protein uL11 family. Part of the ribosomal stalk of the 50S ribosomal subunit. Interacts with L10 and the large rRNA to form the base of the stalk. L10 forms an elongated spine to which L12 dimers bind in a sequential fashion forming a multimeric L10(L12)X complex. One or more lysine residues are methylated.

In terms of biological role, forms part of the ribosomal stalk which helps the ribosome interact with GTP-bound translation factors. The protein is Large ribosomal subunit protein uL11 of Chlorobium chlorochromatii (strain CaD3).